The sequence spans 139 residues: Transcription antitermination protein NusB (139 aa).

It belongs to the NusB family.

Involved in transcription antitermination. Required for transcription of ribosomal RNA (rRNA) genes. Binds specifically to the boxA antiterminator sequence of the ribosomal RNA (rrn) operons. The protein is Transcription antitermination protein NusB of Edwardsiella ictaluri (strain 93-146).